The primary structure comprises 407 residues: Probable tRNA sulfurtransferase (407 aa).

The 105-residue stretch at 61–165 folds into the THUMP domain; sequence NEITYRLSKI…LDAIYMYEEV (105 aa). ATP-binding positions include 183–184, 208–209, Arg-265, Gly-287, and Gln-296; these read ML and HF.

It belongs to the ThiI family.

It is found in the cytoplasm. The enzyme catalyses [ThiI sulfur-carrier protein]-S-sulfanyl-L-cysteine + a uridine in tRNA + 2 reduced [2Fe-2S]-[ferredoxin] + ATP + H(+) = [ThiI sulfur-carrier protein]-L-cysteine + a 4-thiouridine in tRNA + 2 oxidized [2Fe-2S]-[ferredoxin] + AMP + diphosphate. It carries out the reaction [ThiS sulfur-carrier protein]-C-terminal Gly-Gly-AMP + S-sulfanyl-L-cysteinyl-[cysteine desulfurase] + AH2 = [ThiS sulfur-carrier protein]-C-terminal-Gly-aminoethanethioate + L-cysteinyl-[cysteine desulfurase] + A + AMP + 2 H(+). It functions in the pathway cofactor biosynthesis; thiamine diphosphate biosynthesis. In terms of biological role, catalyzes the ATP-dependent transfer of a sulfur to tRNA to produce 4-thiouridine in position 8 of tRNAs, which functions as a near-UV photosensor. Also catalyzes the transfer of sulfur to the sulfur carrier protein ThiS, forming ThiS-thiocarboxylate. This is a step in the synthesis of thiazole, in the thiamine biosynthesis pathway. The sulfur is donated as persulfide by IscS. The chain is Probable tRNA sulfurtransferase from Staphylococcus aureus (strain bovine RF122 / ET3-1).